Here is a 295-residue protein sequence, read N- to C-terminus: Pyridoxal 5'-phosphate synthase subunit PdxS (295 aa).

Aspartate 25 contacts D-ribose 5-phosphate. Catalysis depends on lysine 82, which acts as the Schiff-base intermediate with D-ribose 5-phosphate. Glycine 154 contributes to the D-ribose 5-phosphate binding site. Arginine 166 serves as a coordination point for D-glyceraldehyde 3-phosphate. Residues glycine 215 and 236–237 (GS) each bind D-ribose 5-phosphate.

Belongs to the PdxS/SNZ family. In the presence of PdxT, forms a dodecamer of heterodimers.

The enzyme catalyses aldehydo-D-ribose 5-phosphate + D-glyceraldehyde 3-phosphate + L-glutamine = pyridoxal 5'-phosphate + L-glutamate + phosphate + 3 H2O + H(+). It functions in the pathway cofactor biosynthesis; pyridoxal 5'-phosphate biosynthesis. Its function is as follows. Catalyzes the formation of pyridoxal 5'-phosphate from ribose 5-phosphate (RBP), glyceraldehyde 3-phosphate (G3P) and ammonia. The ammonia is provided by the PdxT subunit. Can also use ribulose 5-phosphate and dihydroxyacetone phosphate as substrates, resulting from enzyme-catalyzed isomerization of RBP and G3P, respectively. The chain is Pyridoxal 5'-phosphate synthase subunit PdxS from Listeria monocytogenes serotype 4b (strain CLIP80459).